The chain runs to 280 residues: Undecaprenyl-diphosphatase (280 aa).

Helical transmembrane passes span 1 to 21 (MTIL…FLPV), 41 to 61 (FVRA…LVLY), 87 to 107 (FDLY…GFLF), 115 to 135 (LGSV…MLFV), 147 to 167 (ITYP…FLPG), 186 to 206 (KAAA…ATLL), 225 to 245 (IVLL…IKFF), and 260 to 280 (YRIL…SLAV).

Belongs to the UppP family.

It is found in the cell inner membrane. It catalyses the reaction di-trans,octa-cis-undecaprenyl diphosphate + H2O = di-trans,octa-cis-undecaprenyl phosphate + phosphate + H(+). In terms of biological role, catalyzes the dephosphorylation of undecaprenyl diphosphate (UPP). Confers resistance to bacitracin. The protein is Undecaprenyl-diphosphatase of Porphyromonas gingivalis (strain ATCC 33277 / DSM 20709 / CIP 103683 / JCM 12257 / NCTC 11834 / 2561).